Consider the following 826-residue polypeptide: Zinc phosphodiesterase ELAC protein 2 (826 aa).

The N-terminal 16 residues, 1–16 (MWALCSLLRSAAGRTM), are a transit peptide targeting the mitochondrion. Disordered regions lie at residues 16–51 (MSQG…PSGC) and 188–231 (EQRR…VSQR). Basic and acidic residues predominate over residues 27–38 (ARRERPRKDPLR). 6 positions are modified to phosphoserine: Ser199, Ser208, Ser212, Ser229, Ser618, and Ser736. The segment covering 208 to 224 (SPERSSDSESNENEPHL) has biased composition (basic and acidic residues). Positions 798–826 (ELAGGLEDGEPQQKRAHTEEPQAKKVRAQ) are disordered. The span at 808–820 (PQQKRAHTEEPQA) shows a compositional bias: basic and acidic residues.

Belongs to the RNase Z family. Homodimer. Interacts with PTCD1. Zn(2+) is required as a cofactor.

It localises to the mitochondrion. The protein localises to the mitochondrion matrix. The protein resides in the mitochondrion nucleoid. It is found in the nucleus. The catalysed reaction is Endonucleolytic cleavage of RNA, removing extra 3' nucleotides from tRNA precursor, generating 3' termini of tRNAs. A 3'-hydroxy group is left at the tRNA terminus and a 5'-phosphoryl group is left at the trailer molecule.. Its function is as follows. Zinc phosphodiesterase, which displays mitochondrial tRNA 3'-processing endonuclease activity. Involved in tRNA maturation, by removing a 3'-trailer from precursor tRNA. Associates with mitochondrial DNA complexes at the nucleoids to initiate RNA processing and ribosome assembly. The chain is Zinc phosphodiesterase ELAC protein 2 (ELAC2) from Pan troglodytes (Chimpanzee).